The chain runs to 492 residues: ATP synthase subunit beta, chloroplastic (492 aa).

170–177 (GGAGVGKT) contacts ATP.

This sequence belongs to the ATPase alpha/beta chains family. F-type ATPases have 2 components, CF(1) - the catalytic core - and CF(0) - the membrane proton channel. CF(1) has five subunits: alpha(3), beta(3), gamma(1), delta(1), epsilon(1). CF(0) has four main subunits: a(1), b(1), b'(1) and c(9-12).

The protein resides in the plastid. The protein localises to the chloroplast thylakoid membrane. It carries out the reaction ATP + H2O + 4 H(+)(in) = ADP + phosphate + 5 H(+)(out). Produces ATP from ADP in the presence of a proton gradient across the membrane. The catalytic sites are hosted primarily by the beta subunits. This is ATP synthase subunit beta, chloroplastic from Angiopteris evecta (Mule's foot fern).